The primary structure comprises 103 residues: UPF0235 protein Dole_0289 (103 aa).

The protein belongs to the UPF0235 family.

The polypeptide is UPF0235 protein Dole_0289 (Desulfosudis oleivorans (strain DSM 6200 / JCM 39069 / Hxd3) (Desulfococcus oleovorans)).